The chain runs to 233 residues: Membrane glycoprotein UL9 (233 aa).

Positions 1–20 (MSKRLQVFPWITILFYTSKS) are cleaved as a signal peptide. Residues N40, N94, N101, N131, and N169 are each glycosylated (N-linked (GlcNAc...) asparagine; by host). The chain crosses the membrane as a helical span at residues 194–214 (MWIIPLVIVITIIVLICFKFP).

The protein belongs to the HHV-5 UL9 family.

The protein resides in the host membrane. This is Membrane glycoprotein UL9 (UL9) from Homo sapiens (Human).